The sequence spans 322 residues: Exosome complex component RRP4 homolog (322 aa).

The 79-residue stretch at 94 to 172 folds into the S1 motif domain; that stretch reads GDIVVGRVIE…HDGSLQLQAR (79 aa). The region spanning 182 to 237 is the KH domain; it reads GQLLKVDPYLVKRSKHHFHYVESLGIDLIIGCNGFIWVGEHVEVRDPMAIDDQKDE.

Belongs to the RRP4 family. Component of the RNA exosome complex. Interacts with RPP41. Expressed in roots, stems, rosette and cauline leaves, flowers and siliques.

Its subcellular location is the cytoplasm. The protein resides in the nucleus. It localises to the nucleolus. Non-catalytic component of the RNA exosome complex which has 3'-&gt;5' exoribonuclease activity and participates in a multitude of cellular RNA processing, maturation and degradation events. In vitro, is an active and distributive 3'-&gt;5' exonuclease requiring a free 3'-OH on the substrate and releasing nucleoside 5'-monophosphates. Required for normal embryo development. The protein is Exosome complex component RRP4 homolog of Arabidopsis thaliana (Mouse-ear cress).